Here is a 164-residue protein sequence, read N- to C-terminus: Glutamate uptake regulatory protein (164 aa).

In terms of domain architecture, HTH asnC-type spans 5-66 (LDDFDIKILD…LLDPQKIGLG (62 aa)). The segment at residues 24-43 (MAELSEKTGLSANACWRRIR) is a DNA-binding region (H-T-H motif).

Functionally, represses the secondary, H(+)-coupled glutamate uptake system (Gluemp) genes. The sequence is that of Glutamate uptake regulatory protein (grp) from Zymomonas mobilis subsp. mobilis (strain ATCC 10988 / DSM 424 / LMG 404 / NCIMB 8938 / NRRL B-806 / ZM1).